The chain runs to 574 residues: Actin-binding protein wsp1 (574 aa).

In terms of domain architecture, WH1 spans 19-130 (IPKSTNKIIA…KKVLDKGCHP (112 aa)). Disordered regions lie at residues 144-186 (KGSS…ELLN), 221-494 (AGTP…IAEL), and 517-574 (KSRK…DEWD). Positions 149-158 (HAPNNSNIQP) are enriched in polar residues. Pro residues-rich tracts occupy residues 230-240 (PPIPPSIPSSR) and 251-260 (PAPPPIPPPS). Low complexity-rich tracts occupy residues 297–306 (SRVSAAALAA) and 324–335 (KPPIGNGSSNSS). Positions 352 to 368 (PLPPQGRSAPPPPPPRS) are enriched in pro residues. S386 bears the Phosphoserine mark. The segment covering 415-485 (PPVPTPPSLP…PPPAPAPAPA (71 aa)) has biased composition (pro residues). Residues 499–518 (GRANLMASIRASGGMDLLKS) form the WH2 domain. The segment covering 521–545 (VSASPSVASTKTSNPPVEAPPSNNL) has biased composition (polar residues). Residues 563–574 (SDEEDEDDDEWD) are compositionally biased toward acidic residues.

Interacts with vrp1.

It is found in the cytoplasm. It localises to the cytoskeleton. In terms of biological role, has a role in regulating actin assembly, so regulating polarized growth. This Schizosaccharomyces pombe (strain 972 / ATCC 24843) (Fission yeast) protein is Actin-binding protein wsp1 (wsp1).